The primary structure comprises 216 residues: Squamosa promoter-binding-like protein 13 (216 aa).

The tract at residues 32 to 110 is disordered; that stretch reads GDGGAALPSP…PSGGGGGPRC (79 aa). Residues 67-91 are compositionally biased toward low complexity; it reads SSSAAVAAGASSSSSSSSVAAAARR. Over residues 94–108 the composition is skewed to gly residues; sequence GRAGGGAPSGGGGGP. The SBP-type zinc finger occupies 107 to 184; that stretch reads GPRCQVERCG…AGHNERRRKS (78 aa). The Zn(2+) site is built by Cys110, Cys115, Cys132, His135, Cys151, Cys154, His158, and Cys170. Positions 167-183 match the Bipartite nuclear localization signal motif; that stretch reads KRSCRRRLAGHNERRRK. Residues 175-216 are disordered; that stretch reads AGHNERRRKSAADTAHGENCRHADQDAGRSHQGTGNPPFQIR. Basic and acidic residues predominate over residues 189 to 203; the sequence is AHGENCRHADQDAGR. Over residues 205-216 the composition is skewed to polar residues; the sequence is HQGTGNPPFQIR.

Ubiquitous.

The protein localises to the nucleus. Trans-acting factor that binds specifically to the consensus nucleotide sequence 5'-TNCGTACAA-3'. May be involved in panicle development. The sequence is that of Squamosa promoter-binding-like protein 13 (SPL13) from Oryza sativa subsp. japonica (Rice).